A 218-amino-acid chain; its full sequence is Glutathione S-transferase Mu 3 (218 aa).

One can recognise a GST N-terminal domain in the interval 2 to 88; that stretch reads PMTLGYWNTR…YLGRKHNLCG (87 aa). Glutathione is bound by residues 7–8, 46–50, and 59–60; these read YW, WLSEK, and NL. Residue Lys-50 forms a Glycyl lysine isopeptide (Lys-Gly) (interchain with G-Cter in SUMO2) linkage. A Glycyl lysine isopeptide (Lys-Gly) (interchain with G-Cter in SUMO2) cross-link involves residue Lys-69. 72–73 contacts glutathione; it reads QS. The region spanning 90–208 is the GST C-terminal domain; that stretch reads TEEERIRVDT…KSSRFLPRPV (119 aa).

It belongs to the GST superfamily. Mu family. Homodimer.

The protein localises to the cytoplasm. The catalysed reaction is RX + glutathione = an S-substituted glutathione + a halide anion + H(+). Its function is as follows. Conjugation of reduced glutathione to a wide number of exogenous and endogenous hydrophobic electrophiles. This Mus musculus (Mouse) protein is Glutathione S-transferase Mu 3 (Gstm3).